We begin with the raw amino-acid sequence, 618 residues long: MPPYRSRTTTHGRNMAGARSLWRATGVKNEDFGKPIIAVANSFTQFVPGHVHLKDMGQLVAEEIEKAGGIAKEFNTIAIDDGIAMGHGGMLYSLPSRELIADSVEYMVNAHCADALVCISNCDKITPGMLMASMRLNIPTVFVSGGPMEAGKAEVKGVKRALDLIDAMVIAADDHYSDGEVEVIEQTACATCGSCSGMFTANSMNCLTEALGLSFPGNGSMLATHSDREQLFRKAGHTIVDMARSYYEQDDAAVLPRSIATLEAFENAMSLDIAMGGSTNTVLHLLAVAQEGNVPFTMADIDRLSRHVPCLCKVAPAKNDVHMEDVHRAGGVMAILGQLDRAGLINTSLRTIHSPTLGAALDAWDISRDSCSEEAQLFYRAAPGGVPTQKAFSQSSRYEALDTDREKGVIRSKNHAFSTDGGLAVLFGNLAPEGSIVKTAGVDESILKFTGKAKVYESQEAAVAGILGNDVEAGEVVIVRYEGPKGGPGMQEMLYPTSYLKSKGLGKLCALITDGRFSGGSSGLSIGHVSPEAAEGGLIALVETGDTIVIDIPERIIHLDVDDAVIADRHARMEAKGAAAWKPQNRNRPISSALKAYAALTTNAARGAVRDVNQLERR.

D81 is a binding site for Mg(2+). A [2Fe-2S] cluster-binding site is contributed by C122. D123 and K124 together coordinate Mg(2+). K124 carries the post-translational modification N6-carboxylysine. Residue C195 coordinates [2Fe-2S] cluster. E492 contacts Mg(2+). The active-site Proton acceptor is the S518.

Belongs to the IlvD/Edd family. As to quaternary structure, homodimer. It depends on [2Fe-2S] cluster as a cofactor. Mg(2+) is required as a cofactor.

The catalysed reaction is (2R)-2,3-dihydroxy-3-methylbutanoate = 3-methyl-2-oxobutanoate + H2O. The enzyme catalyses (2R,3R)-2,3-dihydroxy-3-methylpentanoate = (S)-3-methyl-2-oxopentanoate + H2O. The protein operates within amino-acid biosynthesis; L-isoleucine biosynthesis; L-isoleucine from 2-oxobutanoate: step 3/4. Its pathway is amino-acid biosynthesis; L-valine biosynthesis; L-valine from pyruvate: step 3/4. Functionally, functions in the biosynthesis of branched-chain amino acids. Catalyzes the dehydration of (2R,3R)-2,3-dihydroxy-3-methylpentanoate (2,3-dihydroxy-3-methylvalerate) into 2-oxo-3-methylpentanoate (2-oxo-3-methylvalerate) and of (2R)-2,3-dihydroxy-3-methylbutanoate (2,3-dihydroxyisovalerate) into 2-oxo-3-methylbutanoate (2-oxoisovalerate), the penultimate precursor to L-isoleucine and L-valine, respectively. The polypeptide is Dihydroxy-acid dehydratase (Zymomonas mobilis subsp. mobilis (strain ATCC 31821 / ZM4 / CP4)).